A 348-amino-acid polypeptide reads, in one-letter code: Macrophage-capping protein (348 aa).

Residue Met1 is modified to N-acetylmethionine. The stretch at 27–75 (EKLKPVPVAQENQGVFFSGDSYLVLHNGPEEVSHLHLWIGQQSSRDEQG) is one Gelsolin-like 1 repeat. Positions 137 to 146 (KKLYQVKGKK) match the Nuclear localization signal motif. 2 Gelsolin-like repeats span residues 148–188 (IRAT…LERN) and 261–307 (MNLT…KERQ). The residue at position 337 (Ser337) is a Phosphoserine.

Belongs to the villin/gelsolin family. Interacts with NUP62. Interacts with NUTF2 and RAN; involved in CAPG nuclear import. Post-translationally, the N-terminus is blocked. In terms of tissue distribution, macrophages and macrophage-like cells.

It is found in the nucleus. The protein localises to the cytoplasm. Its subcellular location is the melanosome. The protein resides in the cell projection. It localises to the lamellipodium. It is found in the ruffle. Functionally, calcium-sensitive protein which reversibly blocks the barbed ends of actin filaments but does not sever preformed actin filaments. May play an important role in macrophage function. May play a role in regulating cytoplasmic and/or nuclear structures through potential interactions with actin. May bind DNA. The polypeptide is Macrophage-capping protein (CAPG) (Homo sapiens (Human)).